A 417-amino-acid chain; its full sequence is DnaJ protein homolog ANJ1 (417 aa).

In terms of domain architecture, J spans 11–76 (STRYYEILGV…REIYDQYGED (66 aa)). A CR-type zinc finger spans residues 135 to 219 (GTTKKLSLSR…CKGEKVVQEK (85 aa)). 3 CXXCXGXG motif repeats span residues 148–155 (CSKCTGKG), 164–171 (CSGCQGTG), and 191–198 (CNECKGTG). The stretch at 207-214 (CPQCKGEK) is one CXXCXGXG motif; approximate repeat. A disordered region spans residues 384 to 417 (IEEEMKRKQTQAQQEAYDEDDEPAGGQRVQCAQQ). A Cysteine methyl ester modification is found at Cys414. A lipid anchor (S-farnesyl cysteine) is attached at Cys414. The propeptide at 415–417 (AQQ) is removed in mature form.

The protein localises to the membrane. Its function is as follows. Plays a continuous role in plant development probably in the structural organization of compartments. This Atriplex nummularia (Old man saltbush) protein is DnaJ protein homolog ANJ1.